The following is a 993-amino-acid chain: Ephrin type-A receptor 7 (993 aa).

Residues 1–27 form the signal peptide; sequence MVLRSRLPPWIMLCSVWLLRFAHTGEA. Residues 28-550 lie on the Extracellular side of the membrane; the sequence is QAAKEVILLD…TAVSSEQNPV (523 aa). The Eph LBD domain occupies 32–210; it reads EVILLDSKAQ…YYKKCWSIIE (179 aa). Fibronectin type-III domains follow at residues 331-441 and 442-537; these read PPSA…TGQA and APSQ…TLEE. Asn-343 and Asn-410 each carry an N-linked (GlcNAc...) asparagine glycan. A helical transmembrane segment spans residues 551–571; that stretch reads IIIAVVAVAGTIILVFMVFGF. Residues 572 to 993 lie on the Cytoplasmic side of the membrane; sequence IIGRRHCGYS…LHLHGTGIQV (422 aa). 2 positions are modified to phosphotyrosine; by autocatalysis: Tyr-603 and Tyr-609. The Protein kinase domain maps to 628-889; it reads IKIERVIGAG…QIVGILDKMI (262 aa). ATP is bound by residues 634 to 642 and Lys-660; that span reads IGAGEFGEV. Asp-753 serves as the catalytic Proton acceptor. A phosphotyrosine; by autocatalysis mark is found at Tyr-786 and Tyr-935. Residues 918-982 form the SAM domain; it reads TTFCSVGEWL…MSSIQTMRAQ (65 aa). Positions 991–993 match the PDZ-binding motif; sequence IQV.

This sequence belongs to the protein kinase superfamily. Tyr protein kinase family. Ephrin receptor subfamily. In terms of assembly, heterotetramer upon binding of the ligand. The heterotetramer is composed of an ephrin dimer and a receptor dimer. Oligomerization is probably required to induce biological responses. Post-translationally, phosphorylated.

The protein resides in the cell membrane. The catalysed reaction is L-tyrosyl-[protein] + ATP = O-phospho-L-tyrosyl-[protein] + ADP + H(+). Receptor tyrosine kinase which binds promiscuously GPI-anchored ephrin-A family ligands residing on adjacent cells, leading to contact-dependent bidirectional signaling into neighboring cells. The signaling pathway downstream of the receptor is referred to as forward signaling while the signaling pathway downstream of the ephrin ligand is referred to as reverse signaling. Among GPI-anchored ephrin-A ligands, EFNA5 is a cognate/functional ligand for EPHA7 and their interaction regulates brain development modulating cell-cell adhesion and repulsion. Has a repellent activity on axons and is for instance involved in the guidance of corticothalamic axons and in the proper topographic mapping of retinal axons to the colliculus. May also regulate brain development through a caspase(CASP3)-dependent proapoptotic activity. Forward signaling may result in activation of components of the ERK signaling pathway including MAP2K1, MAP2K2, MAPK1 and MAPK3 which are phosphorylated upon activation of EPHA7. This is Ephrin type-A receptor 7 (EPHA7) from Gallus gallus (Chicken).